Consider the following 96-residue polypeptide: Protein Vpr (96 aa).

The segment at 1-42 is homooligomerization; the sequence is MEQAPEDQGPQREPYNDWTLELLEELKNEAVRHFPRIWLHSL. Ser79, Ser94, and Ser96 each carry phosphoserine; by host.

It belongs to the HIV-1 VPR protein family. As to quaternary structure, homooligomer, may form homodimer. Interacts with p6-gag region of the Pr55 Gag precursor protein through a (Leu-X-X)4 motif near the C-terminus of the P6gag protein. Interacts with host UNG. May interact with host RAD23A/HHR23A. Interacts with host VPRBP/DCAF1, leading to hijack the CUL4A-RBX1-DDB1-DCAF1/VPRBP complex, mediating ubiquitination of host proteins such as TERT and ZGPAT and arrest of the cell cycle in G2 phase. Phosphorylated on several residues by host. These phosphorylations regulate VPR activity for the nuclear import of the HIV-1 pre-integration complex.

It localises to the virion. It is found in the host nucleus. Its subcellular location is the host extracellular space. In terms of biological role, during virus replication, may deplete host UNG protein, and incude G2-M cell cycle arrest. Acts by targeting specific host proteins for degradation by the 26S proteasome, through association with the cellular CUL4A-DDB1 E3 ligase complex by direct interaction with host VPRPB/DCAF-1. Cell cycle arrest reportedly occurs within hours of infection and is not blocked by antiviral agents, suggesting that it is initiated by the VPR carried into the virion. Additionally, VPR induces apoptosis in a cell cycle dependent manner suggesting that these two effects are mechanistically linked. Detected in the serum and cerebrospinal fluid of AIDS patient, VPR may also induce cell death to bystander cells. Functionally, during virus entry, plays a role in the transport of the viral pre-integration (PIC) complex to the host nucleus. This function is crucial for viral infection of non-dividing macrophages. May act directly at the nuclear pore complex, by binding nucleoporins phenylalanine-glycine (FG)-repeat regions. This Human immunodeficiency virus type 1 group M subtype B (strain 89.6) (HIV-1) protein is Protein Vpr.